The following is a 3291-amino-acid chain: Protocadherin-16 (3291 aa).

Positions 1–35 (MQKELSVALSCPGMKSLRTLLPLLVLLGATVPGSW) are cleaved as a signal peptide. Over 36 to 2933 (GQAGSLDLQI…PDLNLLLVGA (2898 aa)) the chain is Extracellular. 27 Cadherin domains span residues 37 to 137 (QAGS…APAF), 138 to 249 (PQAR…APAF), 250 to 356 (NQSR…QPSM), 369 to 466 (VSEA…APAF), 476 to 572 (LPEV…EPQF), 573 to 679 (QRTF…PPQF), 680 to 784 (YPRE…PPIF), 785 to 888 (EQLQ…SPAF), 889 to 994 (PAPE…APRF), 995 to 1105 (DSPT…EPTF), 1100 to 1205 (SEEP…SPTF), 1218 to 1317 (IQVP…SPDL), 1326 to 1429 (VPVV…APTF), 1430 to 1539 (ARDP…APVF), 1539 to 1642 (FASP…APAF), 1643 to 1744 (PQQE…TPTF), 1745 to 1848 (GNTH…APVF), 1849 to 1953 (PVPS…APAF), 1976 to 2061 (LATL…GPRF), 2062 to 2164 (PRTS…APRF), 2165 to 2270 (LRPH…RPTI), 2270 to 2369 (IPQP…VPTF), 2370 to 2475 (SQSL…APSF), 2476 to 2595 (TLPH…PPVF), 2596 to 2699 (TRAS…GPAF), 2700 to 2806 (PLSL…DPVF), and 2807 to 2926 (LAPS…APDL). N-linked (GlcNAc...) asparagine glycosylation occurs at Asn396. N-linked (GlcNAc...) asparagine glycosylation occurs at Asn2354. Residues 2867–2886 (SRAPGSGTTTSGGGGRTRRE) form a disordered region. A helical membrane pass occupies residues 2934-2954 (VAASLGVVVVLALAALVLGLV). Over 2955 to 3291 (RARSRKAEAA…EPPDDTELRI (337 aa)) the chain is Cytoplasmic. A disordered region spans residues 2978–3033 (SLQKLGREPPSPPPSEHLYHQTLPSYGGPGAGGPYPRGGSLDPSHSSGRGSAEAAE). Gly residues predominate over residues 3004–3013 (GGPGAGGPYP). Residue Ser3048 is modified to Phosphoserine. 2 disordered regions span residues 3051–3081 (SSLA…APDT) and 3226–3291 (ASHR…ELRI). Over residues 3237 to 3259 (SLSSAAMSPSFSPSLSPLAARSP) the composition is skewed to low complexity. The segment covering 3270–3279 (PSASALSTES) has biased composition (polar residues).

As to quaternary structure, heterophilic interaction with FAT4; this interaction affects their respective protein levels. In terms of tissue distribution, expressed in the epicardium and atrioventricular sulcus (at protein level).

It localises to the cell membrane. Calcium-dependent cell-adhesion protein. Mediates functions in neuroprogenitor cell proliferation and differentiation. In the heart, has a critical role for proper morphogenesis of the mitral valve, acting in the regulation of cell migration involved in valve formation. The polypeptide is Protocadherin-16 (Dchs1) (Mus musculus (Mouse)).